Here is a 786-residue protein sequence, read N- to C-terminus: DNA double-strand break repair Rad50 ATPase (786 aa).

ATP contacts are provided by residues Lys13, 33 to 39 (NGSGKTT), and Gln138. Coiled-coil stretches lie at residues 194-249 (LKAE…LKSI), 337-455 (EKAK…RALE), and 551-650 (ALER…VKAL). Residues 366–459 (EIAELQNKIN…KIRALEKYKG (94 aa)) enclose the Zinc-hook domain. Zn(2+) contacts are provided by Cys411 and Cys414.

The protein belongs to the SMC family. RAD50 subfamily. As to quaternary structure, homodimer. Forms a heterotetramer composed of two Mre11 subunits and two Rad50 subunits. Zn(2+) is required as a cofactor.

Part of the Rad50/Mre11 complex, which is involved in the early steps of DNA double-strand break (DSB) repair. The complex may facilitate opening of the processed DNA ends to aid in the recruitment of HerA and NurA. Rad50 controls the balance between DNA end bridging and DNA resection via ATP-dependent structural rearrangements of the Rad50/Mre11 complex. The sequence is that of DNA double-strand break repair Rad50 ATPase from Nanoarchaeum equitans (strain Kin4-M).